Here is a 468-residue protein sequence, read N- to C-terminus: Pituitary adenylate cyclase-activating polypeptide type I receptor (468 aa).

A signal peptide spans 1–20 (MAGVVHVSLAALLLLPMAPA). The Extracellular portion of the chain corresponds to 21 to 152 (MHSDCIFKKE…TGDQDYYYLS (132 aa)). 3 cysteine pairs are disulfide-bonded: cysteine 34/cysteine 63, cysteine 54/cysteine 118, and cysteine 77/cysteine 134. N-linked (GlcNAc...) asparagine glycans are attached at residues asparagine 48, asparagine 60, and asparagine 117. The interval 125 to 139 (EPFPHYFDACGFDEY) is important for ADCYAP1/PACAP ligand binding and specificity. A helical membrane pass occupies residues 153–177 (VKALYTVGYSTSLVTLTTAMVILCR). The Cytoplasmic segment spans residues 178–187 (FRKLHCTRNF). A helical transmembrane segment spans residues 188–208 (IHMNLFVSFMLRAISVFIKDW). Residues 209 to 223 (ILYAEQDSNHCFIST) lie on the Extracellular side of the membrane. A helical membrane pass occupies residues 224 to 249 (VECKAVMVFFHYCVVSNYFWLFIEGL). Cysteine 226 and cysteine 296 are disulfide-bonded. At 250–267 (YLFTLLVETFFPERRYFY) the chain is on the cytoplasmic side. Residues 268-290 (WYTIIGWGTPTVCVTVWATLRLY) form a helical membrane-spanning segment. At 291–302 (FDDTGCWDMNDS) the chain is on the extracellular side. An N-linked (GlcNAc...) asparagine glycan is attached at asparagine 300. The helical transmembrane segment at 303–329 (TALWWVIKGPVVGSIMVNFVLFIGIIV) threads the bilayer. The Cytoplasmic portion of the chain corresponds to 330–347 (ILVQKLQSPDMGGNESSI). A helical transmembrane segment spans residues 348-374 (YLRLARSTLLLIPLFGIHYTVFAFSPE). A glycan (N-linked (GlcNAc...) asparagine) is linked at asparagine 375. Residues 375–379 (NVSKR) lie on the Extracellular side of the membrane. A helical transmembrane segment spans residues 380–403 (ERLVFELGLGSFQGFVVAVLYCFL). Residues 404–468 (NGEVQAEIKR…SGLPADNLAT (65 aa)) lie on the Cytoplasmic side of the membrane. 2 positions are modified to phosphoserine: serine 434 and serine 447.

The protein belongs to the G-protein coupled receptor 2 family. Interacts with maxadilan, a vasodilator peptide from Lutzomyia longipalpis saliva; the interaction results in ADCYAP1R1 activation. As to expression, most abundant in the brain, low expression in the lung, liver, thymus, spleen, pancreas and placenta.

The protein localises to the cell membrane. With respect to regulation, several synthetic peptides derived from maxadilan, a vasodilator peptide from Lutzomyia longipalpis saliva, act as antagonists for ADCYAP1R1. Functionally, g protein-coupled receptor activated by the neuropeptide pituitary adenylate cyclase-activating polypeptide (ADCYAP1/PACAP). Binds both PACAP27 and PACAP38 bioactive peptides. Ligand binding causes a conformation change that triggers signaling via guanine nucleotide-binding proteins (G proteins) and modulates the activity of downstream effectors. Activates cAMP-dependent pathway. May regulate the release of adrenocorticotropin, luteinizing hormone, growth hormone, prolactin, epinephrine, and catecholamine. May play a role in spermatogenesis and sperm motility. Causes smooth muscle relaxation and secretion in the gastrointestinal tract. The protein is Pituitary adenylate cyclase-activating polypeptide type I receptor of Homo sapiens (Human).